The chain runs to 396 residues: Transcription factor E2FC (396 aa).

Polar residues predominate over residues Pro34–Phe48. The interval Pro34 to Ser57 is disordered. Residues Arg155–Gly220 mediate DNA binding. Residues Gln226 to Asp268 adopt a coiled-coil conformation. Residues Leu236 to Leu264 form a leucine-zipper region. The segment at Asp376–Trp391 is retinoblastoma protein binding.

Belongs to the E2F/DP family. In terms of assembly, heterodimer with DP proteins. Interacts preferentially with DPB, but also with DPA. No interaction with DPB when phosphorylated. Interacts with SKP2A, CDKA-1 and maize retinoblastoma-related protein RBR1. Component of a DREAM-like complex which modulates a variety of developmentally regulated genes and of the mitotic genes in proliferating and differentiated cells. Interacts with MYB3R3 at later stages of leaves development. Phosphorylated by cyclin-dependent kinase. Phosphorylation is necessary to target E2FC for proteolysis. As to expression, expressed in meristematic areas, vascular tissues, apical part of the roots, cotyledons, upper region of the hypocotyls, trichomes, young flower buds and pollen grains.

Its subcellular location is the cytoplasm. Its function is as follows. Involved in transcriptional repression. May act by repressing E2F-regulated genes in mature differentiated cells, but is not an antagonist of E2FA. Restricts cell division and is involved in the coordination between cell proliferation and endoreduplication during development. May play a role during the transition from skotomorphogenesis to photomorphogenesis. Regulated by phosphorylation-dependent proteolysis via the protein-ubiquitin ligase SCF(SKP2A) complex. In Arabidopsis thaliana (Mouse-ear cress), this protein is Transcription factor E2FC (E2FC).